Here is a 727-residue protein sequence, read N- to C-terminus: Plakophilin-1 (727 aa).

Residues methionine 1–lysine 235 are required for binding to single stranded DNA. The tract at residues methionine 1–leucine 287 is required for interaction with EIF4A1. Serine 4 carries the phosphoserine modification. Residues threonine 48 to serine 69 are disordered. Phosphorylation in this region is required for cytoplasmic localization and protein stabilization regions lie at residues serine 54–serine 69 and arginine 117–serine 192. Serine 119, serine 120, serine 122, and serine 143 each carry phosphoserine. Residues tyrosine 161–isoleucine 270 form a required for WNT-mediated nuclear localization region. ARM repeat units follow at residues serine 244 to phenylalanine 275, glutamine 276 to phenylalanine 317, arginine 318 to serine 360, threonine 361 to arginine 412, asparagine 413 to alanine 443, asparagine 505 to methionine 536, glycine 537 to leucine 583, leucine 584 to glycine 629, and asparagine 630 to serine 693.

Belongs to the beta-catenin family. As to quaternary structure, part of a complex that contains DSG3, PKP1, YAP1 and YWHAG; the complex is required for localization of DSG3 and YAP1 to the cell membrane in keratinocytes. Interacts (via N-terminus) with KRT5/CK5, KRT8/CK8 (via rod domain), KRT15/CK15 and KRT18/CK18 (via rod domain) as part of intermediate filaments. Interacts with VIM (via rod domain). Interacts with DSP. Interacts with DES. Interacts with FXR1; the interaction may facilitate the binding of PKP1 to PKP2, PKP3 and DSP mRNA. Interacts (via N-terminus) with EIF4A1; the interaction promotes EIF4A1 recruitment to the cap-dependent translation complex and EIF4A1 ATPase activity. Interacts with TJP1/ZO-1; the interaction facilitates TJP1/ZO-1 localization to the plasma membrane. Interacts (when phosphorylated) with YWHAG; the interaction results in translocation of PKP1 to the cytoplasm and loss of intercellular adhesion in keratinocytes. In terms of processing, phosphorylated by AKT2; required for interaction with YWHAG and subsequent localization away from desmosomes to the cytoplasm. Phosphorylation of Ser-119 by AKT2 promotes PKP1-driven cap-dependent mRNA translation and decreases intercellular adhesion, phosphorylation is promoted by insulin. Phosphorylation by RIPK4 at the N-terminus is required for its role in differentiation of keratinocytes and DSG1 localization at cell junctions.

The protein resides in the nucleus. It localises to the cytoplasm. Its subcellular location is the perinuclear region. The protein localises to the cell junction. It is found in the desmosome. The protein resides in the cell membrane. It localises to the stress granule. In terms of biological role, a component of desmosome cell-cell junctions which are required for positive regulation of cellular adhesion. Plays a role in desmosome protein expression regulation and localization to the desmosomal plaque, thereby maintaining cell sheet integrity and anchorage of desmosomes to intermediate filaments. Required for localization of DSG3 and YAP1 to the cell membrane in keratinocytes in response to mechanical strain, via the formation of an interaction complex composed of DSG3, YAP1, PKP1 and YWHAG. Positively regulates differentiation of keratinocytes, potentially via promoting localization of DSG1 at desmosome cell junctions. Required for calcium-independent development and maturation of desmosome plaques specifically at lateral cell-cell contacts in differentiating keratinocytes. Plays a role in the maintenance of DSG3 protein abundance, DSG3 clustering and localization of these clusters to the cell membrane in keratinocytes. May also promote keratinocyte proliferation and morphogenesis during postnatal development. Required for tight junction inside-out transepidermal barrier function of the skin. Promotes Wnt-mediated proliferation and differentiation of ameloblasts, via facilitating TJP1/ZO-1 localization to tight junctions. Binds single-stranded DNA (ssDNA), and may thereby play a role in sensing DNA damage and promoting cell survival. Positively regulates cap-dependent translation and as a result cell proliferation, via recruitment of EIF4A1 to the initiation complex and promotion of EIF4A1 ATPase activity. Regulates the mRNA stability and protein abundance of desmosome components PKP2, PKP3, DSC2 and DSP, potentially via its interaction with FXR1. May facilitate the formation of intermediate filaments. The chain is Plakophilin-1 (PKP1) from Bos taurus (Bovine).